Here is a 75-residue protein sequence, read N- to C-terminus: Small ribosomal subunit protein bS21 (75 aa).

Belongs to the bacterial ribosomal protein bS21 family.

The chain is Small ribosomal subunit protein bS21 from Brucella abortus (strain S19).